A 203-amino-acid polypeptide reads, in one-letter code: Early nodulin-like protein 9 (203 aa).

The first 27 residues, 1–27 (MARNLKSMMLCGFGLLCFLMIVDRAYA), serve as a signal peptide directing secretion. Positions 28 to 130 (REFTVGGATG…NEKLVVIVMA (103 aa)) constitute a Phytocyanin domain. C84 and C118 form a disulfide bridge. N103 carries an N-linked (GlcNAc...) asparagine glycan. The tract at residues 134–181 (GNKNTASSPPSPAPAPSGESAPSPPVSGTFEMTPAPTPTTSEDTPNSA) is disordered. S180 is lipidated: GPI-anchor amidated serine. A propeptide spans 181–203 (AASSLSFVAALLGAALASTLFLH) (removed in mature form).

The protein belongs to the early nodulin-like (ENODL) family. Specifically observed at the plasma membrane of sieve elements in vascular tissues of leaves, stems, roots, flowers and reproductive organs. Absent from companion cells.

It is found in the cell membrane. Functionally, may act as a carbohydrate transporter. Mainly required for reproductive functions. This is Early nodulin-like protein 9 from Arabidopsis thaliana (Mouse-ear cress).